A 229-amino-acid chain; its full sequence is Endonuclease V (229 aa).

Mg(2+) contacts are provided by aspartate 36 and aspartate 104.

The protein belongs to the endonuclease V family. It depends on Mg(2+) as a cofactor.

It is found in the cytoplasm. The enzyme catalyses Endonucleolytic cleavage at apurinic or apyrimidinic sites to products with a 5'-phosphate.. DNA repair enzyme involved in the repair of deaminated bases. Selectively cleaves double-stranded DNA at the second phosphodiester bond 3' to a deoxyinosine leaving behind the intact lesion on the nicked DNA. This chain is Endonuclease V, found in Pectobacterium carotovorum subsp. carotovorum (strain PC1).